We begin with the raw amino-acid sequence, 450 residues long: Neuraminidase (450 aa).

The Intravirion portion of the chain corresponds to 1 to 6; it reads MNPNQK. Residues 7–27 form a helical membrane-spanning segment; that stretch reads IITIGSICMVVGIISLMLQIG. The involved in apical transport and lipid raft association stretch occupies residues 11-33; the sequence is GSICMVVGIISLMLQIGNIISVW. Residues 28–450 lie on the Virion surface side of the membrane; sequence NIISVWVSHI…GAELPFTIDK (423 aa). The interval 36–71 is hypervariable stalk region; it reads HIIQTWHPNQPEPCNQSINFYTEQAAASVTLAGNSS. N50 and N69 each carry an N-linked (GlcNAc...) asparagine; by host glycan. A head of neuraminidase region spans residues 72–450; the sequence is LCPISGWAIY…GAELPFTIDK (379 aa). 8 cysteine pairs are disulfide-bonded: C73–C398, C105–C110, C165–C212, C214–C219, C260–C273, C262–C271, C299–C316, and C402–C427. Residue R99 coordinates substrate. N127 is a glycosylation site (N-linked (GlcNAc...) asparagine; by host). Catalysis depends on D132, which acts as the Proton donor/acceptor. R133 is a substrate binding site. N216 carries an N-linked (GlcNAc...) asparagine; by host glycan. 258–259 is a substrate binding site; the sequence is EE. Residue R274 participates in substrate binding. Residues D275, G279, and D305 each coordinate Ca(2+). Residue R349 coordinates substrate. The active-site Nucleophile is Y383.

This sequence belongs to the glycosyl hydrolase 34 family. As to quaternary structure, homotetramer. Ca(2+) serves as cofactor. In terms of processing, N-glycosylated.

Its subcellular location is the virion membrane. The protein resides in the host apical cell membrane. It carries out the reaction Hydrolysis of alpha-(2-&gt;3)-, alpha-(2-&gt;6)-, alpha-(2-&gt;8)- glycosidic linkages of terminal sialic acid residues in oligosaccharides, glycoproteins, glycolipids, colominic acid and synthetic substrates.. Its activity is regulated as follows. Inhibited by the neuraminidase inhibitors zanamivir (Relenza) and oseltamivir (Tamiflu). These drugs interfere with the release of progeny virus from infected cells and are effective against all influenza strains. Resistance to neuraminidase inhibitors is quite rare. Catalyzes the removal of terminal sialic acid residues from viral and cellular glycoconjugates. Cleaves off the terminal sialic acids on the glycosylated HA during virus budding to facilitate virus release. Additionally helps virus spread through the circulation by further removing sialic acids from the cell surface. These cleavages prevent self-aggregation and ensure the efficient spread of the progeny virus from cell to cell. Otherwise, infection would be limited to one round of replication. Described as a receptor-destroying enzyme because it cleaves a terminal sialic acid from the cellular receptors. May facilitate viral invasion of the upper airways by cleaving the sialic acid moieties on the mucin of the airway epithelial cells. Likely to plays a role in the budding process through its association with lipid rafts during intracellular transport. May additionally display a raft-association independent effect on budding. Plays a role in the determination of host range restriction on replication and virulence. Sialidase activity in late endosome/lysosome traffic seems to enhance virus replication. The sequence is that of Neuraminidase from Aves (Cat).